A 345-amino-acid polypeptide reads, in one-letter code: MKVLGIETSCDETGVAIYDSEQGLIANQLYTQIALHADYGGVVPELASRDHIRKTAPLIRAALKEADLTAEDIDGIAYTAGPGLVGALLVGATIARSLAFAWNVPAVSVHHMEGHLLAPMLESPQNRPHFPFVALLVSGGHTQLVRVDGVGKYELLGESIDDAAGEAFDKTAKLLGLDYPGGAALSRLAEKGSAGRFTFPKPMTDRPGLDFSFSGLKTAAANTIRQTIKQKGDLTEQTKADIAHAFQTAVVETLAIKCKRALQQTGYNTLVIAGGVSANKQLRHRLAQLMHALGGKVFYPSPQFCTDNGAMIAYVGHLRLQAGESSGLEVDVKPRWVMTELPALA.

Fe cation is bound by residues His111 and His115. Substrate is bound by residues 136 to 140, Asp169, Gly182, and Asn279; that span reads LVSGG. Asp307 provides a ligand contact to Fe cation.

The protein belongs to the KAE1 / TsaD family. It depends on Fe(2+) as a cofactor.

The protein localises to the cytoplasm. It catalyses the reaction L-threonylcarbamoyladenylate + adenosine(37) in tRNA = N(6)-L-threonylcarbamoyladenosine(37) in tRNA + AMP + H(+). Required for the formation of a threonylcarbamoyl group on adenosine at position 37 (t(6)A37) in tRNAs that read codons beginning with adenine. Is involved in the transfer of the threonylcarbamoyl moiety of threonylcarbamoyl-AMP (TC-AMP) to the N6 group of A37, together with TsaE and TsaB. TsaD likely plays a direct catalytic role in this reaction. This Actinobacillus succinogenes (strain ATCC 55618 / DSM 22257 / CCUG 43843 / 130Z) protein is tRNA N6-adenosine threonylcarbamoyltransferase.